A 124-amino-acid polypeptide reads, in one-letter code: Ribonuclease P protein component 2 (124 aa).

This sequence belongs to the eukaryotic/archaeal RNase P protein component 2 family. Consists of a catalytic RNA component and at least 4-5 protein subunits.

Its subcellular location is the cytoplasm. It carries out the reaction Endonucleolytic cleavage of RNA, removing 5'-extranucleotides from tRNA precursor.. Part of ribonuclease P, a protein complex that generates mature tRNA molecules by cleaving their 5'-ends. The sequence is that of Ribonuclease P protein component 2 from Methanothermobacter thermautotrophicus (strain ATCC 29096 / DSM 1053 / JCM 10044 / NBRC 100330 / Delta H) (Methanobacterium thermoautotrophicum).